A 731-amino-acid polypeptide reads, in one-letter code: Unconventional prefoldin RPB5 interactor-like protein (731 aa).

2 coiled-coil regions span residues 91 to 115 (RLKLAEEQLKKLAVENDLWQKKLHT) and 143 to 176 (LAEHRKRMRQQKQKERLEREAEPVKKDNEVLRKL). Residues 205-217 (PLKSTNESSPKSL) are compositionally biased toward polar residues. 3 disordered regions span residues 205 to 224 (PLKSTNESSPKSLTQEEEDE), 259 to 302 (MSGE…EEEV), and 370 to 396 (ASEEEEEVVENNHLPDEPSKELSTVSE). Residues 220–258 (EEEDELWKKLEAEEQNEADELSSEAEESLKTTDNLVRQL) adopt a coiled-coil conformation. Residues 285 to 300 (ISEDDGDDDDEGDQEE) show a composition bias toward acidic residues. 2 coiled-coil regions span residues 357-379 (DDLQDLVFEQELEASEEEEEVVE) and 452-477 (SIKTKRQTTQDILQKVERNIEFVKEN). 2 stretches are compositionally biased toward polar residues: residues 508–518 (GAIPSPSSDQS) and 575–599 (SQFSKPNSSEICFTHSGSITPTSND). 3 disordered regions span residues 508 to 527 (GAIPSPSSDQSDGIPGKPSD), 567 to 682 (GSAY…DLRD), and 694 to 731 (VEKEPTAPEPLPPGKFIDSHAPKKRVSRFKEQRALNKT). A compositionally biased stretch (basic and acidic residues) spans 611 to 621 (FYEKYEKDRAK). Positions 623–644 (SKSNSSEGDATDPESATKSILR) are enriched in polar residues. Positions 661–673 (KKGRKVRNQKKKE) are enriched in basic residues. Positions 721-731 (RFKEQRALNKT) are enriched in basic and acidic residues.

This sequence belongs to the RNA polymerase II subunit 5-mediating protein family. As to quaternary structure, interacts with serine/threonine-protein phosphatases flw/PP1beta9C and Pp1-87B with higher affinity for Pp1-87B.

The protein localises to the cytoplasm. Its subcellular location is the chromosome. It is found in the nucleus. In terms of biological role, inhibits the activity of serine/threonine-protein phosphatases flw/PP1beta9C and Pp1-87B. Required for germ line cell viability and differentiation, normal transcriptional activity and maintenance of DNA integrity. The polypeptide is Unconventional prefoldin RPB5 interactor-like protein (Drosophila melanogaster (Fruit fly)).